A 103-amino-acid chain; its full sequence is Iron-sulfur cluster assembly protein CyaY (103 aa).

This sequence belongs to the frataxin family.

Functionally, involved in iron-sulfur (Fe-S) cluster assembly. May act as a regulator of Fe-S biogenesis. The sequence is that of Iron-sulfur cluster assembly protein CyaY from Rickettsia peacockii (strain Rustic).